The following is a 249-amino-acid chain: Secretion system apparatus lipoprotein SsaJ (249 aa).

The N-terminal stretch at 1–18 (MKVHRIVFLTVLTFFLTA) is a signal peptide. C19 is lipidated: N-palmitoyl cysteine. C19 carries the S-diacylglycerol cysteine lipid modification. Residues 225-245 (LMLSLTGLLLGVGILIGYFCL) traverse the membrane as a helical segment.

It belongs to the YscJ lipoprotein family.

It is found in the cell outer membrane. Its function is as follows. Component of Salmonella pathogenicity island 2 (SPI-2) type III secretion system, required for secretion of some type III-secreted effectors including the SpvB exotoxin. The polypeptide is Secretion system apparatus lipoprotein SsaJ (ssaJ) (Salmonella typhimurium (strain 14028s / SGSC 2262)).